The chain runs to 166 residues: Chorion protein S18 (166 aa).

The signal sequence occupies residues 1 to 17 (MMKFMCLFVCAIAAVSA).

The protein belongs to the chorion protein S15/S18 family.

It is found in the secreted. In terms of biological role, chorion membrane (egg shell) protein; plays a role in protecting the egg from the environment. The sequence is that of Chorion protein S18 (Cp18) from Drosophila grimshawi (Hawaiian fruit fly).